A 428-amino-acid chain; its full sequence is Chaperone SurA (428 aa).

The first 20 residues, 1 to 20, serve as a signal peptide directing secretion; it reads MKNWKTLLLGIAMIANTSFA. PpiC domains are found at residues 171-272 and 282-382; these read STEL…KVND and VTEV…ELLD.

The protein localises to the periplasm. The enzyme catalyses [protein]-peptidylproline (omega=180) = [protein]-peptidylproline (omega=0). In terms of biological role, chaperone involved in the correct folding and assembly of outer membrane proteins. Recognizes specific patterns of aromatic residues and the orientation of their side chains, which are found more frequently in integral outer membrane proteins. May act in both early periplasmic and late outer membrane-associated steps of protein maturation. The sequence is that of Chaperone SurA from Escherichia coli O157:H7.